The following is a 160-amino-acid chain: Transcriptional repressor NrdR (160 aa).

Residues 1 to 11 are compositionally biased toward polar residues; the sequence is MRCPSCSSLDT. The segment at 1 to 20 is disordered; it reads MRCPSCSSLDTQVKDSRPTE. A zinc finger spans residues 3 to 34; sequence CPSCSSLDTQVKDSRPTEDSSVIRRRRVCLAC. Residues 49 to 139 form the ATP-cone domain; it reads LTVIKRNGRR…VYRNFREAKD (91 aa).

This sequence belongs to the NrdR family. It depends on Zn(2+) as a cofactor.

Functionally, negatively regulates transcription of bacterial ribonucleotide reductase nrd genes and operons by binding to NrdR-boxes. The polypeptide is Transcriptional repressor NrdR (Rhodopseudomonas palustris (strain BisA53)).